We begin with the raw amino-acid sequence, 339 residues long: Heat-inducible transcription repressor HrcA (339 aa).

It belongs to the HrcA family.

Negative regulator of class I heat shock genes (grpE-dnaK-dnaJ and groELS operons). Prevents heat-shock induction of these operons. The protein is Heat-inducible transcription repressor HrcA of Clostridioides difficile (strain 630) (Peptoclostridium difficile).